The chain runs to 287 residues: Protease HtpX (287 aa).

Transmembrane regions (helical) follow at residues 4 to 24 and 33 to 53; these read IFLL…VMSI and GGLL…SLAI. A Zn(2+)-binding site is contributed by His-139. Residue Glu-140 is part of the active site. His-143 provides a ligand contact to Zn(2+). Transmembrane regions (helical) follow at residues 154–174 and 195–215; these read LIQG…AGII and AVVF…VAYF. A Zn(2+)-binding site is contributed by Glu-220.

The protein belongs to the peptidase M48B family. Requires Zn(2+) as cofactor.

Its subcellular location is the cell inner membrane. The polypeptide is Protease HtpX (Shewanella frigidimarina (strain NCIMB 400)).